The chain runs to 183 residues: Non-specific lipid transfer protein GPI-anchored 15 (183 aa).

The first 24 residues, methionine 1 to alanine 24, serve as a signal peptide directing secretion. 4 disulfides stabilise this stretch: cysteine 30/cysteine 71, cysteine 40/cysteine 55, cysteine 56/cysteine 97, and cysteine 69/cysteine 107. Residues asparagine 47 and asparagine 86 are each glycosylated (N-linked (GlcNAc...) asparagine). The tract at residues asparagine 108–serine 158 is disordered. The segment covering threonine 149 to serine 158 has biased composition (polar residues). The GPI-anchor amidated serine moiety is linked to residue serine 158. A propeptide spans serine 159–leucine 183 (removed in mature form).

This sequence belongs to the plant LTP family. In terms of tissue distribution, expressed in seedlings, preferentially in the endodermis of hypocotyls and roots. Also observed in siliques.

The protein resides in the cell membrane. In terms of biological role, probable lipid transfer protein. This chain is Non-specific lipid transfer protein GPI-anchored 15, found in Arabidopsis thaliana (Mouse-ear cress).